The primary structure comprises 184 residues: Ribosome maturation factor RimP (184 aa).

It belongs to the RimP family.

It is found in the cytoplasm. In terms of biological role, required for maturation of 30S ribosomal subunits. The sequence is that of Ribosome maturation factor RimP from Zymomonas mobilis subsp. mobilis (strain ATCC 31821 / ZM4 / CP4).